We begin with the raw amino-acid sequence, 203 residues long: Recombination protein RecR (203 aa).

Residues 57–72 form a C4-type zinc finger; that stretch reads CQRCRTLAETPLCSIC. A Toprim domain is found at 80 to 175; that stretch reads GLLCVVESPA…RLSRLAYGVP (96 aa).

This sequence belongs to the RecR family.

In terms of biological role, may play a role in DNA repair. It seems to be involved in an RecBC-independent recombinational process of DNA repair. It may act with RecF and RecO. The sequence is that of Recombination protein RecR from Chromohalobacter salexigens (strain ATCC BAA-138 / DSM 3043 / CIP 106854 / NCIMB 13768 / 1H11).